The following is a 123-amino-acid chain: Large ribosomal subunit protein uL14 (123 aa).

The protein belongs to the universal ribosomal protein uL14 family. In terms of assembly, part of the 50S ribosomal subunit. Forms a cluster with proteins L3 and L19. In the 70S ribosome, L14 and L19 interact and together make contacts with the 16S rRNA in bridges B5 and B8.

Binds to 23S rRNA. Forms part of two intersubunit bridges in the 70S ribosome. The polypeptide is Large ribosomal subunit protein uL14 (Erwinia tasmaniensis (strain DSM 17950 / CFBP 7177 / CIP 109463 / NCPPB 4357 / Et1/99)).